We begin with the raw amino-acid sequence, 289 residues long: Urease accessory protein UreD (289 aa).

This sequence belongs to the UreD family. UreD, UreF and UreG form a complex that acts as a GTP-hydrolysis-dependent molecular chaperone, activating the urease apoprotein by helping to assemble the nickel containing metallocenter of UreC. The UreE protein probably delivers the nickel.

Its subcellular location is the cytoplasm. In terms of biological role, required for maturation of urease via the functional incorporation of the urease nickel metallocenter. This chain is Urease accessory protein UreD, found in Magnetococcus marinus (strain ATCC BAA-1437 / JCM 17883 / MC-1).